The following is a 277-amino-acid chain: Bifunctional protein FolD (277 aa).

Residues 164–166 (GRS), S189, and T230 each bind NADP(+).

It belongs to the tetrahydrofolate dehydrogenase/cyclohydrolase family. As to quaternary structure, homodimer.

It catalyses the reaction (6R)-5,10-methylene-5,6,7,8-tetrahydrofolate + NADP(+) = (6R)-5,10-methenyltetrahydrofolate + NADPH. The enzyme catalyses (6R)-5,10-methenyltetrahydrofolate + H2O = (6R)-10-formyltetrahydrofolate + H(+). Its pathway is one-carbon metabolism; tetrahydrofolate interconversion. Functionally, catalyzes the oxidation of 5,10-methylenetetrahydrofolate to 5,10-methenyltetrahydrofolate and then the hydrolysis of 5,10-methenyltetrahydrofolate to 10-formyltetrahydrofolate. The sequence is that of Bifunctional protein FolD from Clostridium perfringens (strain SM101 / Type A).